Here is a 485-residue protein sequence, read N- to C-terminus: Adenosylhomocysteinase (485 aa).

3 residues coordinate substrate: Thr-60, Asp-146, and Glu-208. Thr-209–Thr-211 serves as a coordination point for NAD(+). Lys-238 and Asp-242 together coordinate substrate. NAD(+)-binding positions include Asn-243, Gly-272–Gly-277, Glu-295, Asn-330, Ile-351–His-353, and Asn-399.

The protein belongs to the adenosylhomocysteinase family. The cofactor is NAD(+).

The protein localises to the cytoplasm. The catalysed reaction is S-adenosyl-L-homocysteine + H2O = L-homocysteine + adenosine. The protein operates within amino-acid biosynthesis; L-homocysteine biosynthesis; L-homocysteine from S-adenosyl-L-homocysteine: step 1/1. Its function is as follows. May play a key role in the regulation of the intracellular concentration of adenosylhomocysteine. This is Adenosylhomocysteinase from Streptomyces coelicolor (strain ATCC BAA-471 / A3(2) / M145).